Consider the following 311-residue polypeptide: Malate dehydrogenase (311 aa).

NAD(+) contacts are provided by residues 7-13 and Asp-34; that span reads GAAGGIG. 2 residues coordinate substrate: Arg-81 and Arg-87. Residues Asn-94 and 117–119 contribute to the NAD(+) site; that span reads ITN. Substrate is bound by residues Asn-119 and Arg-153. His-177 functions as the Proton acceptor in the catalytic mechanism. Met-227 contributes to the NAD(+) binding site.

The protein belongs to the LDH/MDH superfamily. MDH type 1 family. In terms of assembly, homodimer.

It catalyses the reaction (S)-malate + NAD(+) = oxaloacetate + NADH + H(+). Functionally, catalyzes the reversible oxidation of malate to oxaloacetate. In Shewanella baltica (strain OS155 / ATCC BAA-1091), this protein is Malate dehydrogenase.